Here is a 209-residue protein sequence, read N- to C-terminus: Uracil phosphoribosyltransferase (209 aa).

5-phospho-alpha-D-ribose 1-diphosphate contacts are provided by residues R79, R104, and 131-139 (DPMLATGGS). Uracil contacts are provided by residues I194 and 199–201 (GDA). D200 contributes to the 5-phospho-alpha-D-ribose 1-diphosphate binding site.

Belongs to the UPRTase family. Mg(2+) is required as a cofactor.

It catalyses the reaction UMP + diphosphate = 5-phospho-alpha-D-ribose 1-diphosphate + uracil. It functions in the pathway pyrimidine metabolism; UMP biosynthesis via salvage pathway; UMP from uracil: step 1/1. Allosterically activated by GTP. In terms of biological role, catalyzes the conversion of uracil and 5-phospho-alpha-D-ribose 1-diphosphate (PRPP) to UMP and diphosphate. The polypeptide is Uracil phosphoribosyltransferase (Listeria monocytogenes serovar 1/2a (strain ATCC BAA-679 / EGD-e)).